A 388-amino-acid polypeptide reads, in one-letter code: MDEYKIKTVEEGLTKIQFPEFDKISSDAPVFYNPHMELNRDISILALQTFQKQEDRNINICDLFGGSGIRGVRYKNEIDGVGHVFINDISETANEYERHNVELNNLKDIEIFQHDASMFLRMHRGEFDVIDIDPFGTPSPFLDSAGYCSRRNSLLCVTATDTSALCGTYKEPCIRKYNAKPYKSEYCHETGIRILAGFVALTLAKYSKSIEVKLSHSTEHYMRLYIEVKKGSKKSDECLKNIGYLSHCKHCLYREENKGLATSTPDICPECGEKLIQAGPLWLGEIQNEEFISKMIVESENKKLNTKEDVLKLLESCRIEAKSPATFYDVHKICKILKISAPKLDLVFGNLEKEGFEAVKTHFNPLGIKTNAPLKKIKEIIKTLSSSN.

The Trm1 methyltransferase domain maps to 7–381 (KTVEEGLTKI…APLKKIKEII (375 aa)). Positions 40, 70, 88, 115, and 116 each coordinate S-adenosyl-L-methionine. Zn(2+) contacts are provided by cysteine 248, cysteine 251, cysteine 268, and cysteine 271.

Belongs to the class I-like SAM-binding methyltransferase superfamily. Trm1 family.

It carries out the reaction guanosine(26) in tRNA + 2 S-adenosyl-L-methionine = N(2)-dimethylguanosine(26) in tRNA + 2 S-adenosyl-L-homocysteine + 2 H(+). Functionally, dimethylates a single guanine residue at position 26 of a number of tRNAs using S-adenosyl-L-methionine as donor of the methyl groups. The chain is tRNA (guanine(26)-N(2))-dimethyltransferase from Methanobrevibacter smithii (strain ATCC 35061 / DSM 861 / OCM 144 / PS).